A 479-amino-acid chain; its full sequence is Citrate synthase, mitochondrial (479 aa).

The N-terminal 37 residues, 1-37 (MSAILSTTSKSFLSRGSTRQCQNMQKALFALLNARHY), are a transit peptide targeting the mitochondrion. Catalysis depends on residues histidine 312, histidine 358, and aspartate 413. Residue serine 462 is modified to Phosphoserine.

It belongs to the citrate synthase family. As to quaternary structure, monomer and homodimer. Exists as an inactive monomer when phosphorylated. Homodimerization is dependent on dephosphorylation of Ser-462 by PTC7 and is required for activity. In terms of processing, phosphorylation at Ser-462. Dephosphorylated at Ser-462 by PTC7.

The protein localises to the mitochondrion matrix. It carries out the reaction oxaloacetate + acetyl-CoA + H2O = citrate + CoA + H(+). Its pathway is carbohydrate metabolism; tricarboxylic acid cycle; isocitrate from oxaloacetate: step 1/2. With respect to regulation, phosphorylation at Ser-462 inhibits catalytic activity. Dephosphorylation at Ser-462 by PTC7 enhances catalytic activity. Its function is as follows. Specific citrate synthase with catalytic activity only with acetyl-CoA. The protein is Citrate synthase, mitochondrial of Saccharomyces cerevisiae (strain ATCC 204508 / S288c) (Baker's yeast).